The chain runs to 273 residues: 2,3,4,5-tetrahydropyridine-2,6-dicarboxylate N-succinyltransferase (273 aa).

Substrate contacts are provided by R106 and D143.

It belongs to the transferase hexapeptide repeat family. Homotrimer.

The protein resides in the cytoplasm. It catalyses the reaction (S)-2,3,4,5-tetrahydrodipicolinate + succinyl-CoA + H2O = (S)-2-succinylamino-6-oxoheptanedioate + CoA. The protein operates within amino-acid biosynthesis; L-lysine biosynthesis via DAP pathway; LL-2,6-diaminopimelate from (S)-tetrahydrodipicolinate (succinylase route): step 1/3. This chain is 2,3,4,5-tetrahydropyridine-2,6-dicarboxylate N-succinyltransferase, found in Wolbachia sp. subsp. Brugia malayi (strain TRS).